The sequence spans 398 residues: Acetate kinase (398 aa).

Asn8 is a binding site for Mg(2+). Residue Lys15 participates in ATP binding. Substrate is bound at residue Arg89. The Proton donor/acceptor role is filled by Asp146. Residues 206–210, 281–283, and 329–333 contribute to the ATP site; these read HIGNG, DLR, and GVGEN. Glu383 provides a ligand contact to Mg(2+).

Belongs to the acetokinase family. As to quaternary structure, homodimer. Mg(2+) is required as a cofactor. Mn(2+) serves as cofactor.

The protein resides in the cytoplasm. The enzyme catalyses acetate + ATP = acetyl phosphate + ADP. The protein operates within metabolic intermediate biosynthesis; acetyl-CoA biosynthesis; acetyl-CoA from acetate: step 1/2. In terms of biological role, catalyzes the formation of acetyl phosphate from acetate and ATP. Can also catalyze the reverse reaction. This Macrococcus caseolyticus (strain JCSC5402) (Macrococcoides caseolyticum) protein is Acetate kinase.